Reading from the N-terminus, the 84-residue chain is Small ribosomal subunit protein bS20 (84 aa).

The segment at 1 to 28 (MPNIKSAIKRVKTAETRNSRNASQRSAM) is disordered.

Belongs to the bacterial ribosomal protein bS20 family.

Its function is as follows. Binds directly to 16S ribosomal RNA. This chain is Small ribosomal subunit protein bS20, found in Listeria monocytogenes serotype 4b (strain CLIP80459).